The chain runs to 1102 residues: WASH complex subunit 4 (1102 aa).

The protein belongs to the SWIP family. In terms of assembly, component of the WASH complex.

The protein resides in the early endosome. Functionally, acts at least in part as component of the WASH complex which may regulate wash nucleation-promoting factor (NPF) activity and is required for its membrane targeting during endosomal sorting. During embryogenesis, not involved in the wash-dependent developmental migration of hemocytes anteriorly from the tail. The chain is WASH complex subunit 4 from Drosophila melanogaster (Fruit fly).